The primary structure comprises 284 residues: 2-dehydro-3-deoxyphosphooctonate aldolase (284 aa).

It belongs to the KdsA family.

It is found in the cytoplasm. It carries out the reaction D-arabinose 5-phosphate + phosphoenolpyruvate + H2O = 3-deoxy-alpha-D-manno-2-octulosonate-8-phosphate + phosphate. The protein operates within carbohydrate biosynthesis; 3-deoxy-D-manno-octulosonate biosynthesis; 3-deoxy-D-manno-octulosonate from D-ribulose 5-phosphate: step 2/3. It participates in bacterial outer membrane biogenesis; lipopolysaccharide biosynthesis. The chain is 2-dehydro-3-deoxyphosphooctonate aldolase from Histophilus somni (strain 2336) (Haemophilus somnus).